The chain runs to 260 residues: Putative ABC transporter ATP-binding protein PF0068 (260 aa).

In terms of domain architecture, ABC transporter spans 2–234 (IEVKGVWFWY…DLKRYKLEEP (233 aa)). 34–41 (GPNGSGKT) serves as a coordination point for ATP.

This sequence belongs to the ABC transporter superfamily.

It localises to the cell membrane. Its function is as follows. Probably part of an ABC transporter complex. Responsible for energy coupling to the transport system. This Pyrococcus furiosus (strain ATCC 43587 / DSM 3638 / JCM 8422 / Vc1) protein is Putative ABC transporter ATP-binding protein PF0068.